The chain runs to 108 residues: MKYLAAYLLLVNAGNATPSAADVKAVLSAADIEVEEEKVEKLISESDGKNVEELIAEGNEKLSSVPSGAPAAAAGGASAAAGGEATEEAAEEEAAEESDDDMSFGLFD.

The disordered stretch occupies residues 62–108 (LSSVPSGAPAAAAGGASAAAGGEATEEAAEEEAAEESDDDMSFGLFD). Residues 68–84 (GAPAAAAGGASAAAGGE) show a composition bias toward low complexity. The segment covering 85–102 (ATEEAAEEEAAEESDDDM) has biased composition (acidic residues). A Phosphoserine modification is found at Ser98.

This sequence belongs to the eukaryotic ribosomal protein P1/P2 family.

Plays an important role in the elongation step of protein synthesis. The polypeptide is Large ribosomal subunit protein P2A (RPP2A) (Candida albicans (Yeast)).